We begin with the raw amino-acid sequence, 496 residues long: N-succinylglutamate 5-semialdehyde dehydrogenase (496 aa).

229–234 (GSYATG) contributes to the NAD(+) binding site. Active-site residues include glutamate 252 and cysteine 286.

This sequence belongs to the aldehyde dehydrogenase family. AstD subfamily.

The enzyme catalyses N-succinyl-L-glutamate 5-semialdehyde + NAD(+) + H2O = N-succinyl-L-glutamate + NADH + 2 H(+). Its pathway is amino-acid degradation; L-arginine degradation via AST pathway; L-glutamate and succinate from L-arginine: step 4/5. Its function is as follows. Catalyzes the NAD-dependent reduction of succinylglutamate semialdehyde into succinylglutamate. The protein is N-succinylglutamate 5-semialdehyde dehydrogenase of Legionella pneumophila subsp. pneumophila (strain Philadelphia 1 / ATCC 33152 / DSM 7513).